A 419-amino-acid chain; its full sequence is F-box/LRR-repeat protein At1g67190 (419 aa).

The region spanning 1–48 (MDYLPVEVIGNILSRLGGARDVVIASATCRKWREACRKHLQTLSFNSA) is the F-box domain. 9 LRR repeats span residues 53-82 (YRDLTTNRLEILITQTIFQTMGLQGLSIMM), 96-124 (WLMYTRDTLRRLSYNVRTTPNVNILEICG), 133-157 (LAHNSITGVEPSFQRFPCLKSLSLS), 158-183 (YVSISALDLNLLLSACPMIESLELVS), 185-209 (EIAMSDAQVTIELSSPTLKSVYFDG), 245-272 (HFKLDDVSVIHLDIMETSESLEVVDVNH), 273-297 (FTMVWPKFYQMISRSQKLKKLRLWD), 301-326 (DDDDEIIDVESIAAGFSHLTHLSLSY), and 356-381 (INDVFSIWVEELLRRCPNLKKLIIYG).

This Arabidopsis thaliana (Mouse-ear cress) protein is F-box/LRR-repeat protein At1g67190.